The chain runs to 350 residues: Histidinol-phosphate aminotransferase (350 aa).

An N6-(pyridoxal phosphate)lysine modification is found at Lys212.

The protein belongs to the class-II pyridoxal-phosphate-dependent aminotransferase family. Histidinol-phosphate aminotransferase subfamily. Homodimer. It depends on pyridoxal 5'-phosphate as a cofactor.

It catalyses the reaction L-histidinol phosphate + 2-oxoglutarate = 3-(imidazol-4-yl)-2-oxopropyl phosphate + L-glutamate. It functions in the pathway amino-acid biosynthesis; L-histidine biosynthesis; L-histidine from 5-phospho-alpha-D-ribose 1-diphosphate: step 7/9. This Geobacter sulfurreducens (strain ATCC 51573 / DSM 12127 / PCA) protein is Histidinol-phosphate aminotransferase.